Reading from the N-terminus, the 467-residue chain is Transcription factor CRF1 (467 aa).

Residues 1 to 10 (MLLSAPVNST) are compositionally biased toward polar residues. 4 disordered regions span residues 1–42 (MLLS…VVLS), 62–110 (DFES…SSKT), 151–170 (SKSE…TNED), and 341–361 (TYRD…DRKR). A compositionally biased stretch (basic residues) spans 11–23 (VRRKPHSPNKKKP). Residues 28–42 (TAASFSSSSSTVVLS) show a composition bias toward low complexity. The span at 89-102 (YSREENTNEVEEKT) shows a compositional bias: basic and acidic residues.

Interacts with FHL1 to form a repressor complex. The formation of the CRF1-FHL1 complex is inhibited by the TOR pathway. In terms of processing, phosphorylated by CDC28 and YAK1.

The protein resides in the cytoplasm. The protein localises to the nucleus. Transcription factor, corepressor with FHL1 of ribosomal protein genes. May be involved in the blocking of the spread of silencing. The protein is Transcription factor CRF1 (CRF1) of Saccharomyces cerevisiae (strain ATCC 204508 / S288c) (Baker's yeast).